The sequence spans 180 residues: UPF0149 protein XCV3523 (180 aa).

The protein belongs to the UPF0149 family.

The chain is UPF0149 protein XCV3523 from Xanthomonas euvesicatoria pv. vesicatoria (strain 85-10) (Xanthomonas campestris pv. vesicatoria).